Consider the following 479-residue polypeptide: MCLLHISLPYLSCALLPGWYFDARPAASIVMFAAAEENDDPYPGKSGYNDTCELMDMDGAVASFDEGMLSAIESVYSIPTKKRLALPPPKAASPGALYQRLQGELGFPEGQTLLSAMEKWNEDMFSALPGHVDLYTEIALLSTSVDEVVRAGLDSLPTPSHYSPEVDLNAHGDEPFPEVPALEDDLEIYVISAQRFYLSELRTREEHYARLLRGYCVALLHYLYGSAKRQLRGSGSDASLMHKFKQVVRDRYYREAANLARLLYLHLYVSVTREVSWRLHASQVINQGVFVSLHYFWAQRRKFECLFHPVLFNHGVVILENDPLEFHDLQRINYRRRELGLPLIRAGLIEEENSPLEAEPLFSGKLPRTIGFLTHQIRTKMEAYSDAHPATPLFPLAEHSYSKRIGGRLSYGTTTEAMMDPPSPSAVLPGDPVPPLTVGVRQTAATLAIPSNLTLQSMETDGLDYSSMTGDELNQMFDI.

It belongs to the herpesviridae tegument protein VP16 protein family. In terms of assembly, associates with the VP16-induced complex; binding to host HCFC1 activates VP16 for association with the octamer motif-binding host protein POU2F1, to form a multiprotein-DNA complex responsible for activating transcription of the viral immediate early genes.

The protein localises to the virion tegument. The protein resides in the host nucleus. Functionally, transcriptional activator of immediate-early (IE) gene products (alpha genes). Acts as a key activator of lytic infection by initiating the lytic program through the assembly of the transcriptional regulatory VP16-induced complex composed of VP16 and two cellular factors, HCFC1 and POU2F1. VP16-induced complex represents a regulatory switch: when it is on, it promotes IE-gene expression and thus lytic infection, and when it is off, it limits IE-gene transcription favoring latent infection. May play a role in the aggregation of tegument proteins around nucleocapsids during virus morphogenesis. This Equus caballus (Horse) protein is Tegument protein VP16 homolog.